Here is a 537-residue protein sequence, read N- to C-terminus: T-complex protein 1 subunit theta (537 aa).

The protein belongs to the TCP-1 chaperonin family. Heterooligomeric complex.

It is found in the cytoplasm. Molecular chaperone; assists the folding of proteins upon ATP hydrolysis. Known to play a role, in vitro, in the folding of actin and tubulin. This is T-complex protein 1 subunit theta (cct8) from Dictyostelium discoideum (Social amoeba).